The primary structure comprises 166 residues: Small ribosomal subunit protein uS5 (166 aa).

The region spanning 12–75 (YIEKLVQVNR…EAARRNMIQV (64 aa)) is the S5 DRBM domain.

This sequence belongs to the universal ribosomal protein uS5 family. As to quaternary structure, part of the 30S ribosomal subunit. Contacts proteins S4 and S8.

Functionally, with S4 and S12 plays an important role in translational accuracy. In terms of biological role, located at the back of the 30S subunit body where it stabilizes the conformation of the head with respect to the body. This chain is Small ribosomal subunit protein uS5, found in Azotobacter vinelandii (strain DJ / ATCC BAA-1303).